The following is an 81-amino-acid chain: Mu/omega-theraphotoxin-Hs1a (81 aa).

Residues 1-21 form the signal peptide; the sequence is MRASMFLALAGLVLLFVVCYA. Residues 22-48 constitute a propeptide that is removed on maturation; sequence SESEEKEFPRELLFKFFAVDDFKGEER. 3 disulfides stabilise this stretch: Cys50-Cys65, Cys57-Cys70, and Cys64-Cys77.

The protein belongs to the neurotoxin 10 (Hwtx-1) family. 23 (HwTx-I) subfamily. Expressed by the venom gland.

It is found in the secreted. In terms of biological role, lethal toxin with multiple biological activities. Inhibits voltage-gated TTX-sensitive sodium channels in DRG neurons (IC(50)=55 nM) and also shows activity when directly tested on Nav1.7/SCN9A (IC(50)=25.1-630 nM). Inhibits N-type calcium channels (Cav2.2/CACNA1B (IC(50)=100 nM)). Also blocks neuromuscular transmission. In vivo, intrathecal injected toxin shows analgesic activity in the rat formalin-induced pain model, without induction of motor dysfunction in rats. The protein is Mu/omega-theraphotoxin-Hs1a of Cyriopagopus schmidti (Chinese bird spider).